Consider the following 340-residue polypeptide: MLSDRKKIILKAVVESYSQKRQPVGSKSLIHLPELQFSSATIRYDMLKLEEEGFLKKNHTSSGRIPSFKGYTYYLTHLLTRDYDAANSFPLIDKVIQNKTFHKNKVIKEAIKLLNSLTSYTAMAIGPDVFNNSKISKIDFIPLNHKQALILIITNKGDVQHQNISLDQTKEISIYDLKDIVKIISDLLVGKYLSEAVKIIQSDFVKQTIAKYIRFQEQLIALFIEAFSSFASENTYFAGISEMTKKKEFSDLELIKKIMNLLERKELLKILLNQEGLSFKLSDELQLTPVKDYMILSIPFAIDANEKGTIAILGPSWMKYPKIIPLLEYLSIHLSKLNQE.

This sequence belongs to the HrcA family.

Functionally, negative regulator of class I heat shock genes (grpE-dnaK-dnaJ and groELS operons). Prevents heat-shock induction of these operons. The sequence is that of Heat-inducible transcription repressor HrcA from Phytoplasma australiense.